Here is a 673-residue protein sequence, read N- to C-terminus: Thimet-like oligopeptidase (673 aa).

Residue H465 coordinates Zn(2+). Residue E466 is part of the active site. Zn(2+) is bound by residues H469 and H472.

This sequence belongs to the peptidase M3 family. The cofactor is Zn(2+).

This is Thimet-like oligopeptidase from Dictyostelium discoideum (Social amoeba).